Here is a 156-residue protein sequence, read N- to C-terminus: Large ribosomal subunit protein uL15 (156 aa).

Positions 1 to 16 are enriched in basic residues; it reads MVRRFKRAVKYRRGSR. The disordered stretch occupies residues 1–35; sequence MVRRFKRAVKYRRGSRTHGWGRVGQHRKSGGSGGK.

It belongs to the universal ribosomal protein uL15 family. In terms of assembly, part of the 50S ribosomal subunit.

In terms of biological role, binds to the 23S rRNA. This is Large ribosomal subunit protein uL15 from Pyrobaculum neutrophilum (strain DSM 2338 / JCM 9278 / NBRC 100436 / V24Sta) (Thermoproteus neutrophilus).